We begin with the raw amino-acid sequence, 228 residues long: Rab-like protein 2A (228 aa).

Residues 28-35 (GDSAVGKS), 76-80 (DTAGQ), and 133-136 (NKID) each bind GTP. Residues 200–228 (LEQEEEDVPDQEQSSSIETPSEEVASPHS) are disordered.

It belongs to the small GTPase superfamily. Rab family. Interacts with IFT27, IFT81, IFT172, ATP6V1E1, HK1, LDHC, MAPRE1 and HSPA2. Expressed in the testis.

Plays an essential role in male fertility, sperm intra-flagellar transport, and tail assembly. Binds, in a GTP-regulated manner, to a specific set of effector proteins including key proteins involved in cilia development and function and delivers them into the growing sperm tail. The polypeptide is Rab-like protein 2A (RABL2A) (Homo sapiens (Human)).